We begin with the raw amino-acid sequence, 789 residues long: Cadherin-10 (789 aa).

Residues 1-22 (MTIQQVLLLLLLWMWLLHPCRT) form the signal peptide. Positions 23–54 (EMLFRRTPDLRPKGFVGRTSGSDGKALHRQKR) are excised as a propeptide. 5 Cadherin domains span residues 55-160 (GWMW…EPTF), 161-269 (PEEI…PPRF), 270-384 (PQST…PPVF), 385-487 (SRSS…DNAP), and 488-606 (QFAV…LLLP). The Extracellular segment spans residues 55–606 (GWMWNQFFLL…SCNAEALLLP (552 aa)). N-linked (GlcNAc...) asparagine glycosylation occurs at N256. Residues N438, N456, and N534 are each glycosylated (N-linked (GlcNAc...) asparagine). A helical transmembrane segment spans residues 607–634 (AGLSTGALIAILLCIIILLVIVVLFAAL). Residues 635 to 789 (KRQRKKEPLI…GGGESDKDAS (155 aa)) lie on the Cytoplasmic side of the membrane.

It is found in the cell membrane. Cadherins are calcium-dependent cell adhesion proteins. They preferentially interact with themselves in a homophilic manner in connecting cells; cadherins may thus contribute to the sorting of heterogeneous cell types. The chain is Cadherin-10 (CDH10) from Gallus gallus (Chicken).